The chain runs to 66 residues: Cell division protein FtsB (66 aa).

At Met-1 to Met-3 the chain is on the cytoplasmic side. A helical membrane pass occupies residues Leu-4–Ile-21. Over Gly-22–Asn-66 the chain is Extracellular. The stretch at Val-38 to Asn-66 forms a coiled coil.

This sequence belongs to the FtsB family.

The protein localises to the cell membrane. Its function is as follows. Essential cell division protein. May link together the upstream cell division proteins, which are predominantly cytoplasmic, with the downstream cell division proteins, which are predominantly extracellular. This chain is Cell division protein FtsB, found in Buchnera aphidicola subsp. Schizaphis graminum (strain Sg).